Here is a 566-residue protein sequence, read N- to C-terminus: Cytochrome c oxidase subunit 1 (566 aa).

The next 7 membrane-spanning stretches (helical) occupy residues 29-49 (IGVL…AFTV), 97-117 (VMIT…ALFG), 141-161 (LSYW…FAPG), 189-209 (LAIF…INMI), 227-247 (LFAW…PVLA), 278-298 (ILWF…FGIV), and 310-330 (IFGY…GFVV). Residue H102 participates in Fe(II)-heme a binding. Residues H284 and Y288 each contribute to the Cu cation site. The segment at residues 284-288 (HPEVY) is a cross-link (1'-histidyl-3'-tyrosine (His-Tyr)). H333 and H334 together coordinate Cu cation. 2 helical membrane passes run 348 to 368 (FMMA…SWIA) and 381 to 401 (MLWA…GIVL). H419 contacts heme a3. 3 helical membrane-spanning segments follow: residues 420-440 (FHYV…YFWI), 455-475 (LHFW…HFLG), and 499-519 (LGAF…FYTL). H421 provides a ligand contact to Fe(II)-heme a. Positions 543–566 (TSPPPEHTFEQLPKREDWERAPAH) are disordered. Basic and acidic residues predominate over residues 549-566 (HTFEQLPKREDWERAPAH).

The protein belongs to the heme-copper respiratory oxidase family. Cu(2+) serves as cofactor. The cofactor is heme.

Its subcellular location is the cell membrane. It catalyses the reaction 4 Fe(II)-[cytochrome c] + O2 + 8 H(+)(in) = 4 Fe(III)-[cytochrome c] + 2 H2O + 4 H(+)(out). It functions in the pathway energy metabolism; oxidative phosphorylation. Functionally, cytochrome c oxidase is the component of the respiratory chain that catalyzes the reduction of oxygen to water. Subunits 1-3 form the functional core of the enzyme complex. Co I is the catalytic subunit of the enzyme. Electrons originating in cytochrome c are transferred via the copper A center of subunit 2 and heme a of subunit 1 to the bimetallic center formed by heme a3 and copper B. This cytochrome c oxidase shows proton pump activity across the membrane in addition to the electron transfer. The protein is Cytochrome c oxidase subunit 1 (ctaD) of Cereibacter sphaeroides (Rhodobacter sphaeroides).